The chain runs to 365 residues: uncharacterized protein (365 aa).

Composition is skewed to basic and acidic residues over residues 1-27 (MDNV…EDHS) and 315-339 (AKDD…ETPK). Disordered regions lie at residues 1 to 31 (MDNV…NSYQ) and 308 to 365 (KEEK…CLIS). A compositionally biased stretch (polar residues) spans 340 to 353 (KASNTPRRNKSNTQ).

To yeast YGL082w. In terms of assembly, interacts with sad1.

The protein localises to the cytoplasm. This is an uncharacterized protein from Schizosaccharomyces pombe (strain 972 / ATCC 24843) (Fission yeast).